A 176-amino-acid chain; its full sequence is Ribosome maturation factor RimM (176 aa).

The 73-residue stretch at 100–172 folds into the PRC barrel domain; the sequence is PDTYYDHQLV…IVEIDPPHGL (73 aa).

It belongs to the RimM family. Binds ribosomal protein uS19.

The protein resides in the cytoplasm. An accessory protein needed during the final step in the assembly of 30S ribosomal subunit, possibly for assembly of the head region. Essential for efficient processing of 16S rRNA. May be needed both before and after RbfA during the maturation of 16S rRNA. It has affinity for free ribosomal 30S subunits but not for 70S ribosomes. This chain is Ribosome maturation factor RimM, found in Mycobacterium bovis (strain ATCC BAA-935 / AF2122/97).